Reading from the N-terminus, the 289-residue chain is Glucosamine-6-phosphate deaminase 1 (289 aa).

D72 acts as the Proton acceptor; for enolization step in catalysis. D141 serves as the catalytic For ring-opening step. H143 functions as the Proton acceptor; for ring-opening step in the catalytic mechanism. E148 serves as the catalytic For ring-opening step. T161 carries the phosphothreonine modification.

This sequence belongs to the glucosamine/galactosamine-6-phosphate isomerase family. Homohexamer. Widely expressed. Detected in brain, liver, kidney, muscle, ovary, testis, spermatids and spermatozoa. In spermatids, located close to the developing acrosome vesicle. In spermatozoa, found close to the acrosomal region.

It localises to the cytoplasm. The catalysed reaction is alpha-D-glucosamine 6-phosphate + H2O = beta-D-fructose 6-phosphate + NH4(+). Its pathway is nucleotide-sugar biosynthesis; UDP-N-acetyl-alpha-D-glucosamine biosynthesis; alpha-D-glucosamine 6-phosphate from D-fructose 6-phosphate: step 1/1. Its activity is regulated as follows. Allosterically activated by N-acetylglucosamine-6-phosphate (GlcNAc6P). In terms of biological role, catalyzes the reversible conversion of alpha-D-glucosamine 6-phosphate (GlcN-6P) into beta-D-fructose 6-phosphate (Fru-6P) and ammonium ion, a regulatory reaction step in de novo uridine diphosphate-N-acetyl-alpha-D-glucosamine (UDP-GlcNAc) biosynthesis via hexosamine pathway. Deamination is coupled to aldo-keto isomerization mediating the metabolic flux from UDP-GlcNAc toward Fru-6P. At high ammonium level can drive amination and isomerization of Fru-6P toward hexosamines and UDP-GlcNAc synthesis. Has a role in fine tuning the metabolic fluctuations of cytosolic UDP-GlcNAc and their effects on hyaluronan synthesis that occur during tissue remodeling. Seems to trigger calcium oscillations in mammalian eggs. These oscillations serve as the essential trigger for egg activation and early development of the embryo. The polypeptide is Glucosamine-6-phosphate deaminase 1 (Mus musculus (Mouse)).